Consider the following 361-residue polypeptide: Mitogen-activated protein kinase 14A (361 aa).

Residues 25-309 (YQNLSPVGSG…AAEALAHPYF (285 aa)) form the Protein kinase domain. Residues 31 to 39 (VGSGAYGTV) and Lys-54 each bind ATP. Asp-151 serves as the catalytic Proton acceptor. A Phosphothreonine; by MAP2K6 modification is found at Thr-181. Positions 181–183 (TGY) match the TXY motif. Position 183 is a phosphotyrosine; by MAP2K6 (Tyr-183).

This sequence belongs to the protein kinase superfamily. CMGC Ser/Thr protein kinase family. MAP kinase subfamily. Mg(2+) is required as a cofactor. Post-translationally, dually phosphorylated on Thr-181 and Tyr-183, which activates the enzyme. As to expression, exclusively expressed in the ovary.

Its subcellular location is the cytoplasm. It is found in the nucleus. The enzyme catalyses L-seryl-[protein] + ATP = O-phospho-L-seryl-[protein] + ADP + H(+). It carries out the reaction L-threonyl-[protein] + ATP = O-phospho-L-threonyl-[protein] + ADP + H(+). Its activity is regulated as follows. Activated by threonine and tyrosine phosphorylation by the dual specificity kinase, MKK6. Its function is as follows. Serine/threonine kinase which acts as an essential component of the MAP kinase signal transduction pathway. Mapk14a is one of the four p38 MAPKs which play an important role in the cascades of cellular responses evoked by extracellular stimuli such as pro-inflammatory cytokines or physical stress leading to direct activation of transcription factors. Accordingly, p38 MAPKs phosphorylate a broad range of proteins and it has been estimated that they may have approximately 200 to 300 substrates each. Some of the targets are downstream kinases which are activated through phosphorylation and further phosphorylate additional targets. This is Mitogen-activated protein kinase 14A (mapk14a) from Cyprinus carpio (Common carp).